A 637-amino-acid polypeptide reads, in one-letter code: Sodium-dependent nutrient amino acid transporter 1 (637 aa).

The span at 1–17 shows a compositional bias: polar residues; the sequence is MELKTMPQNGANAGTQH. A disordered region spans residues 1-39; the sequence is MELKTMPQNGANAGTQHNNNSNNKPDNNEKEAQKKEPER. Residues 1–47 are Cytoplasmic-facing; it reads MELKTMPQNGANAGTQHNNNSNNKPDNNEKEAQKKEPERTNWSNGLE. A compositionally biased stretch (basic and acidic residues) spans 26–39; that stretch reads DNNEKEAQKKEPER. The next 3 membrane-spanning stretches (helical) occupy residues 48–68, 75–95, and 128–148; these read FLMS…FPFT, GAFL…MYYL, and TICI…YLFV. Residues N181 and N195 are each glycosylated (N-linked (GlcNAc...) asparagine). The next 9 membrane-spanning stretches (helical) occupy residues 225 to 245, 254 to 274, 303 to 323, 337 to 357, 397 to 417, 443 to 463, 470 to 490, 515 to 535, and 549 to 569; these read PDWK…LVIM, AAYF…GRAV, AVVQ…MFAS, IVTT…FAIL, LFSA…IVAL, ICGF…ILTL, TYVV…IYGL, FFTP…ISPI, and AGWV…WWYI.

The protein belongs to the sodium:neurotransmitter symporter (SNF) (TC 2.A.22) family.

Its subcellular location is the membrane. In terms of biological role, unusual broad substrate spectrum amino acid:sodium cotransporter that promotes absorption of the D isomers of essential amino acids. Neutral amino acids are the preferred substrates, especially methionine and phenylalanine. The polypeptide is Sodium-dependent nutrient amino acid transporter 1 (Drosophila virilis (Fruit fly)).